Here is a 60-residue protein sequence, read N- to C-terminus: UPF0434 protein Vapar_2640 (60 aa).

This sequence belongs to the UPF0434 family.

The protein is UPF0434 protein Vapar_2640 of Variovorax paradoxus (strain S110).